Here is a 389-residue protein sequence, read N- to C-terminus: Exodeoxyribonuclease 7 large subunit (389 aa).

Belongs to the XseA family. As to quaternary structure, heterooligomer composed of large and small subunits.

It localises to the cytoplasm. The enzyme catalyses Exonucleolytic cleavage in either 5'- to 3'- or 3'- to 5'-direction to yield nucleoside 5'-phosphates.. Functionally, bidirectionally degrades single-stranded DNA into large acid-insoluble oligonucleotides, which are then degraded further into small acid-soluble oligonucleotides. The protein is Exodeoxyribonuclease 7 large subunit of Pseudothermotoga lettingae (strain ATCC BAA-301 / DSM 14385 / NBRC 107922 / TMO) (Thermotoga lettingae).